The chain runs to 210 residues: HTH-type transcriptional repressor FabR (210 aa).

One can recognise an HTH tetR-type domain in the interval 10–70; the sequence is KTRRSLVEAA…TMVDESGLML (61 aa). The H-T-H motif DNA-binding region spans 33 to 52; that stretch reads SLREVAREAGIAPTSFYRHF.

As to quaternary structure, homodimer.

Its subcellular location is the cytoplasm. Represses the transcription of fabB, involved in unsaturated fatty acid (UFA) biosynthesis. By controlling UFA production, FabR directly influences the physical properties of the membrane bilayer. This is HTH-type transcriptional repressor FabR from Salmonella paratyphi A (strain ATCC 9150 / SARB42).